A 73-amino-acid chain; its full sequence is Translation initiation factor IF-1 (73 aa).

The S1-like domain maps to 1-73 (MSEKEAGIEV…TRGRITYRDK (73 aa)).

Belongs to the IF-1 family. Component of the 30S ribosomal translation pre-initiation complex which assembles on the 30S ribosome in the order IF-2 and IF-3, IF-1 and N-formylmethionyl-tRNA(fMet); mRNA recruitment can occur at any time during PIC assembly.

The protein resides in the cytoplasm. In terms of biological role, one of the essential components for the initiation of protein synthesis. Stabilizes the binding of IF-2 and IF-3 on the 30S subunit to which N-formylmethionyl-tRNA(fMet) subsequently binds. Helps modulate mRNA selection, yielding the 30S pre-initiation complex (PIC). Upon addition of the 50S ribosomal subunit IF-1, IF-2 and IF-3 are released leaving the mature 70S translation initiation complex. The polypeptide is Translation initiation factor IF-1 (Anaeromyxobacter sp. (strain Fw109-5)).